The following is a 292-amino-acid chain: Bifunctional protein FolD (292 aa).

NADP(+)-binding positions include 166–168 (GRS), S191, and I232.

It belongs to the tetrahydrofolate dehydrogenase/cyclohydrolase family. As to quaternary structure, homodimer.

It catalyses the reaction (6R)-5,10-methylene-5,6,7,8-tetrahydrofolate + NADP(+) = (6R)-5,10-methenyltetrahydrofolate + NADPH. It carries out the reaction (6R)-5,10-methenyltetrahydrofolate + H2O = (6R)-10-formyltetrahydrofolate + H(+). Its pathway is one-carbon metabolism; tetrahydrofolate interconversion. In terms of biological role, catalyzes the oxidation of 5,10-methylenetetrahydrofolate to 5,10-methenyltetrahydrofolate and then the hydrolysis of 5,10-methenyltetrahydrofolate to 10-formyltetrahydrofolate. In Synechococcus sp. (strain RCC307), this protein is Bifunctional protein FolD.